Here is a 732-residue protein sequence, read N- to C-terminus: Acylamino-acid-releasing enzyme (732 aa).

The residue at position 1 (M1) is an N-acetylmethionine. A phosphoserine mark is found at S185 and S187. Residues S587, D675, and H707 each act as charge relay system in the active site.

As to quaternary structure, homotetramer. In terms of tissue distribution, expressed in erythrocytes (at protein level).

The protein localises to the cytoplasm. The enzyme catalyses Cleavage of an N-acetyl or N-formyl amino acid from the N-terminus of a polypeptide.. Its activity is regulated as follows. Homotetramerization is required for activity. Tetramerization results in the formation of a gated channel which is involved in substrate selection and substrate access to the catalytic sites. In terms of biological role, this enzyme catalyzes the hydrolysis of the N-terminal peptide bond of an N-acetylated peptide to generate an N-acetylated amino acid and a peptide with a free N-terminus. It preferentially cleaves off Ac-Ala, Ac-Met and Ac-Ser. Also, involved in the degradation of oxidized and glycated proteins. The chain is Acylamino-acid-releasing enzyme (APEH) from Homo sapiens (Human).